The primary structure comprises 431 residues: tRNA(Ile)-lysidine synthase (431 aa).

25–30 (SGGPDS) lines the ATP pocket.

It belongs to the tRNA(Ile)-lysidine synthase family.

The protein resides in the cytoplasm. It carries out the reaction cytidine(34) in tRNA(Ile2) + L-lysine + ATP = lysidine(34) in tRNA(Ile2) + AMP + diphosphate + H(+). In terms of biological role, ligates lysine onto the cytidine present at position 34 of the AUA codon-specific tRNA(Ile) that contains the anticodon CAU, in an ATP-dependent manner. Cytidine is converted to lysidine, thus changing the amino acid specificity of the tRNA from methionine to isoleucine. The protein is tRNA(Ile)-lysidine synthase of Lactobacillus gasseri (strain ATCC 33323 / DSM 20243 / BCRC 14619 / CIP 102991 / JCM 1131 / KCTC 3163 / NCIMB 11718 / NCTC 13722 / AM63).